The following is a 190-amino-acid chain: UPF0340 protein BC_5317 (190 aa).

This sequence belongs to the UPF0340 family.

The protein is UPF0340 protein BC_5317 of Bacillus cereus (strain ATCC 14579 / DSM 31 / CCUG 7414 / JCM 2152 / NBRC 15305 / NCIMB 9373 / NCTC 2599 / NRRL B-3711).